Consider the following 240-residue polypeptide: 2,3,4,5-tetrahydropyridine-2,6-dicarboxylate N-acetyltransferase (240 aa).

This sequence belongs to the transferase hexapeptide repeat family. DapH subfamily.

It catalyses the reaction (S)-2,3,4,5-tetrahydrodipicolinate + acetyl-CoA + H2O = L-2-acetamido-6-oxoheptanedioate + CoA. It functions in the pathway amino-acid biosynthesis; L-lysine biosynthesis via DAP pathway; LL-2,6-diaminopimelate from (S)-tetrahydrodipicolinate (acetylase route): step 1/3. Its function is as follows. Catalyzes the transfer of an acetyl group from acetyl-CoA to tetrahydrodipicolinate. This chain is 2,3,4,5-tetrahydropyridine-2,6-dicarboxylate N-acetyltransferase, found in Shouchella clausii (strain KSM-K16) (Alkalihalobacillus clausii).